Here is a 291-residue protein sequence, read N- to C-terminus: G1/S-specific cyclin-D2 (291 aa).

The segment at 261-291 (TRQQTQQRNSSKSVDELDQASTPTDVQDINL) is disordered. A compositionally biased stretch (polar residues) spans 279-291 (QASTPTDVQDINL). At Thr282 the chain carries Phosphothreonine.

It belongs to the cyclin family. Cyclin D subfamily. Interacts with the cdk4 and cdk6 protein kinases to form a serine/threonine kinase holoenzyme complex. The cyclin subunit imparts substrate specificity to the complex. In terms of processing, phosphorylation at Thr-282 by MAP kinases is required for ubiquitination and degradation by the DCX(AMBRA1) complex. Ubiquitinated by the DCX(AMBRA1) complex during the transition from G1 to S cell phase, leading to its degradation: ubiquitination is dependent on Thr-282 phosphorylation. The DCX(AMBRA1) complex represents the major regulator of CCND2 stability during the G1/S transition.

It localises to the nucleus. The protein resides in the cytoplasm. Its subcellular location is the nucleus membrane. Functionally, regulatory component of the cyclin D2-CDK4 (DC) complex that phosphorylates and inhibits members of the retinoblastoma (RB) protein family including RB1 and regulates the cell-cycle during G(1)/S transition. Phosphorylation of RB1 allows dissociation of the transcription factor E2F from the RB/E2F complex and the subsequent transcription of E2F target genes which are responsible for the progression through the G(1) phase. Hypophosphorylates RB1 in early G(1) phase. Cyclin D-CDK4 complexes are major integrators of various mitogenenic and antimitogenic signals. The sequence is that of G1/S-specific cyclin-D2 (ccnd2) from Xenopus laevis (African clawed frog).